A 763-amino-acid polypeptide reads, in one-letter code: RNA-directed RNA polymerase (763 aa).

A RdRp catalytic domain is found at 466–579 (TPVAIGFDMS…LICERTDIDY (114 aa)).

The enzyme catalyses RNA(n) + a ribonucleoside 5'-triphosphate = RNA(n+1) + diphosphate. In terms of biological role, RNA-dependent RNA polymerase that plays an essential role in the virus replication. In Carnation mottle virus (CarMV), this protein is RNA-directed RNA polymerase.